A 102-amino-acid polypeptide reads, in one-letter code: Small ribosomal subunit protein uS10 (102 aa).

It belongs to the universal ribosomal protein uS10 family. Part of the 30S ribosomal subunit.

Its function is as follows. Involved in the binding of tRNA to the ribosomes. In Nitrosopumilus maritimus (strain SCM1), this protein is Small ribosomal subunit protein uS10.